Reading from the N-terminus, the 470-residue chain is tRNA(Ile)-lysidine synthase (470 aa).

32–37 (SGGVDS) lines the ATP pocket.

Belongs to the tRNA(Ile)-lysidine synthase family.

It is found in the cytoplasm. The enzyme catalyses cytidine(34) in tRNA(Ile2) + L-lysine + ATP = lysidine(34) in tRNA(Ile2) + AMP + diphosphate + H(+). Ligates lysine onto the cytidine present at position 34 of the AUA codon-specific tRNA(Ile) that contains the anticodon CAU, in an ATP-dependent manner. Cytidine is converted to lysidine, thus changing the amino acid specificity of the tRNA from methionine to isoleucine. The protein is tRNA(Ile)-lysidine synthase of Shewanella woodyi (strain ATCC 51908 / MS32).